The following is a 744-amino-acid chain: Dual specificity protein kinase shkD (744 aa).

The tract at residues 1–276 (MKRFFSNLFK…SGPPEILPEE (276 aa)) is disordered. Low complexity-rich tracts occupy residues 25 to 70 (PTTS…NSNQ), 79 to 107 (SPSTNQTQTPSNNTISTSPTVTTQPSFTP), and 127 to 200 (TSTT…QTAS). The segment covering 201–210 (VNHTSSDQSL) has biased composition (polar residues). Residues 211-236 (NAQNVTQTNNNNNNNNNNNNNNNANN) show a composition bias toward low complexity. The Protein kinase domain occupies 277–534 (IDRTDFLGQG…EILFRLNEIL (258 aa)). Residues 283-291 (LGQGSFGSV) and Lys304 contribute to the ATP site. The active-site Proton acceptor is the Asp400. The SH2 domain occupies 641-734 (WFHGDIVREQ…LVPCPKFTQE (94 aa)).

Belongs to the protein kinase superfamily. Ser/Thr protein kinase family. SH2 domain-containing protein kinase subfamily.

The protein localises to the membrane. The enzyme catalyses L-seryl-[protein] + ATP = O-phospho-L-seryl-[protein] + ADP + H(+). It carries out the reaction L-threonyl-[protein] + ATP = O-phospho-L-threonyl-[protein] + ADP + H(+). Its function is as follows. Required for proper chemotaxis and phagocytosis; proper spatiotemporal control of F-actin levels in chemotaxing cells. Negative regulator of the PI3K (phosphatidylinositol 3 kinase) pathway. Predominantly phosphorylates serines and threonines and tyrosines at a lower level. In Dictyostelium discoideum (Social amoeba), this protein is Dual specificity protein kinase shkD (shkD).